We begin with the raw amino-acid sequence, 483 residues long: Rhamnulokinase (483 aa).

Residue 11 to 15 (ASSGR) coordinates ATP. Residues glycine 79 and 234-236 (HDT) each bind substrate. The active-site Proton acceptor is the aspartate 235. Residue threonine 257 participates in ATP binding. Asparagine 294 contributes to the substrate binding site. Position 302 (glutamine 302) interacts with ATP. Cysteines 352 and 369 form a disulfide. Glycine 401 is an ATP binding site.

Belongs to the rhamnulokinase family. Requires Mg(2+) as cofactor.

The catalysed reaction is L-rhamnulose + ATP = L-rhamnulose 1-phosphate + ADP + H(+). The protein operates within carbohydrate degradation; L-rhamnose degradation; glycerone phosphate from L-rhamnose: step 2/3. Functionally, involved in the catabolism of L-rhamnose (6-deoxy-L-mannose). Catalyzes the transfer of the gamma-phosphate group from ATP to the 1-hydroxyl group of L-rhamnulose to yield L-rhamnulose 1-phosphate. This Listeria monocytogenes serotype 4b (strain F2365) protein is Rhamnulokinase.